The sequence spans 81 residues: Albumin-1 (81 aa).

Residues 27 to 34 constitute a propeptide that is removed on maturation; sequence LSSVAKMI.

Post-translationally, three disulfide bonds are probably present. In terms of processing, the C-terminal glycine may be removed from A1b.

A1b binds to basic 7S globulin (BG) and stimulates its phosphorylation activity. This is Albumin-1 (LEG1) from Lupinus angustifolius (Narrow-leaved blue lupine).